The sequence spans 343 residues: Cytoplasmic tRNA 2-thiolation protein 1 (343 aa).

Belongs to the TtcA family. CTU1/NCS6/ATPBD3 subfamily.

The protein resides in the cytoplasm. It functions in the pathway tRNA modification; 5-methoxycarbonylmethyl-2-thiouridine-tRNA biosynthesis. Plays a central role in 2-thiolation of mcm(5)S(2)U at tRNA wobble positions of tRNA(Lys), tRNA(Glu) and tRNA(Gln). Directly binds tRNAs and probably acts by catalyzing adenylation of tRNAs, an intermediate required for 2-thiolation. It is unclear whether it acts as a sulfurtransferase that transfers sulfur from thiocarboxylated URM1 onto the uridine of tRNAs at wobble position. The polypeptide is Cytoplasmic tRNA 2-thiolation protein 1 (Drosophila willistoni (Fruit fly)).